The sequence spans 363 residues: Osmoprotective compounds uptake ATP-binding protein GgtA (363 aa).

The ABC transporter domain maps to valine 4–isoleucine 234. Glycine 36 to threonine 43 contacts ATP.

The protein belongs to the ABC transporter superfamily. In terms of assembly, the complex is composed of two ATP-binding proteins (GgtA), two transmembrane proteins (GgtC and GgtD) and a solute-binding protein (GgtB).

The protein localises to the cell membrane. Part of the ABC transporter complex GgtABCD involved in the uptake of the osmoprotective compounds glucosylglycerol (GG), sucrose and trehalose. Responsible for energy coupling to the transport system. In Synechocystis sp. (strain ATCC 27184 / PCC 6803 / Kazusa), this protein is Osmoprotective compounds uptake ATP-binding protein GgtA.